Reading from the N-terminus, the 417-residue chain is Gamma-glutamyl phosphate reductase (417 aa).

The protein belongs to the gamma-glutamyl phosphate reductase family.

It is found in the cytoplasm. The enzyme catalyses L-glutamate 5-semialdehyde + phosphate + NADP(+) = L-glutamyl 5-phosphate + NADPH + H(+). The protein operates within amino-acid biosynthesis; L-proline biosynthesis; L-glutamate 5-semialdehyde from L-glutamate: step 2/2. Functionally, catalyzes the NADPH-dependent reduction of L-glutamate 5-phosphate into L-glutamate 5-semialdehyde and phosphate. The product spontaneously undergoes cyclization to form 1-pyrroline-5-carboxylate. The polypeptide is Gamma-glutamyl phosphate reductase (Haemophilus influenzae (strain PittEE)).